Reading from the N-terminus, the 384-residue chain is 5-amino-6-(D-ribitylamino)uracil--L-tyrosine 4-hydroxyphenyl transferase 2 (384 aa).

Positions 53 to 286 (VSYVVNRNIY…IAISRIILHT (234 aa)) constitute a Radical SAM core domain. Cys-67, Cys-71, and Cys-74 together coordinate [4Fe-4S] cluster.

The protein belongs to the radical SAM superfamily. CofH family. As to quaternary structure, consists of two subunits, CofG and CofH. [4Fe-4S] cluster is required as a cofactor.

It carries out the reaction 5-amino-6-(D-ribitylamino)uracil + L-tyrosine + S-adenosyl-L-methionine = 5-amino-5-(4-hydroxybenzyl)-6-(D-ribitylimino)-5,6-dihydrouracil + 2-iminoacetate + 5'-deoxyadenosine + L-methionine + H(+). Its pathway is cofactor biosynthesis; coenzyme F0 biosynthesis. Its function is as follows. Catalyzes the radical-mediated synthesis of 5-amino-5-(4-hydroxybenzyl)-6-(D-ribitylimino)-5,6-dihydrouracil from 5-amino-6-(D-ribitylamino)uracil and L-tyrosine. This Methanosarcina acetivorans (strain ATCC 35395 / DSM 2834 / JCM 12185 / C2A) protein is 5-amino-6-(D-ribitylamino)uracil--L-tyrosine 4-hydroxyphenyl transferase 2.